Consider the following 187-residue polypeptide: Interferon beta (187 aa).

A signal peptide spans 1 to 21 (MTSRSLLPFVLSLLLPRIIMA). Phosphotyrosine is present on Tyr-24. An intrachain disulfide couples Cys-53 to Cys-162. N-linked (GlcNAc...) asparagine glycosylation is found at Asn-76, Asn-95, Asn-132, and Asn-158.

The protein belongs to the alpha/beta interferon family. As to quaternary structure, monomer.

The protein resides in the secreted. Its function is as follows. Type I interferon cytokine that plays a key role in the innate immune response to infection, developing tumors and other inflammatory stimuli. Signals via binding to high-affinity (IFNAR2) and low-affinity (IFNAR1) heterodimeric receptor, activating the canonical Jak-STAT signaling pathway resulting in transcriptional activation or repression of interferon-regulated genes that encode the effectors of the interferon response, such as antiviral proteins, regulators of cell proliferation and differentiation, and immunoregulatory proteins. Signals mostly via binding to a IFNAR1-IFNAR2 heterodimeric receptor, but can also function with IFNAR1 alone and independently of Jak-STAT pathways. Elicits a wide variety of responses, including antiviral and antibacterial activities, and can regulate the development of B-cells, myelopoiesis and lipopolysaccharide (LPS)-inducible production of tumor necrosis factor. Plays a role in neuronal homeostasis by regulating dopamine turnover and protecting dopaminergic neurons: acts by promoting neuronal autophagy and alpha-synuclein clearance, thereby preventing dopaminergic neuron loss. IFNB1 is more potent than interferon-alpha (IFN-alpha) in inducing the apoptotic and antiproliferative pathways required for control of tumor cell growth. This is Interferon beta (IFNB1) from Tachyglossus aculeatus aculeatus (Southeast Australian short-beaked echidna).